Reading from the N-terminus, the 160-residue chain is Triabin (160 aa).

A signal peptide spans 1 to 18 (MKTIIAVTIFGILTCAYA). Intrachain disulfides connect cysteine 24-cysteine 128, cysteine 57-cysteine 160, and cysteine 87-cysteine 102.

It belongs to the calycin superfamily. Triabin family. As to expression, expressed in salivary glands.

The protein localises to the secreted. Its function is as follows. Thrombin inhibitor. Forms a non-covalent complex with thrombin at a molar ratio of 1:1. Inhibits thrombin-induced platelet aggregation. Prolongs thrombin clotting time and activated partial thromboplastin time. It only minimally suppresses the amidolytic activity of thrombin. Inhibits thrombin-mediated fibrin formation in the host. Inhibits thrombin-induced endothelium-dependent relaxant and contractile responses in host blood vessels. Inhibits thrombin-induced mitogenesis in host vascular smooth muscle cells. In Meccus pallidipennis (Triatomine bug), this protein is Triabin.